Here is a 427-residue protein sequence, read N- to C-terminus: Terminal nucleotidyltransferase 5B (427 aa).

Over residues 1–11 (MMPSESGDESL) the composition is skewed to acidic residues. Residues 1 to 46 (MMPSESGDESLEQPAAQVGTGAASAVATAGAAGGGPDLEASSASLG) are disordered. Low complexity predominate over residues 15–30 (AAQVGTGAASAVATAG).

The protein belongs to the TENT family.

It is found in the cytoplasm. The protein resides in the nucleus. It carries out the reaction RNA(n) + ATP = RNA(n)-3'-adenine ribonucleotide + diphosphate. Catalyzes the transfer of one adenosine molecule from an ATP to an mRNA poly(A) tail bearing a 3'-OH terminal group in an ATP hydrolysis-dependent manner. May be involved in maintaining the translation efficiency of at least some genes through preventing degradation of their mRNAs. Prefers RNA molecules that are adenosine-rich close to 3'-end. In addition, may inhibit cell proliferation and cell cycle progression through ubiquitination of beta-catenin/CTNNB1. In Rattus norvegicus (Rat), this protein is Terminal nucleotidyltransferase 5B.